A 373-amino-acid chain; its full sequence is tRNA 2-selenouridine synthase (373 aa).

The region spanning 12–136 is the Rhodanese domain; that stretch reads FINDRPMMDA…MRGFLLETTE (125 aa). Cys-95 functions as the S-selanylcysteine intermediate in the catalytic mechanism.

The protein belongs to the SelU family. As to quaternary structure, monomer.

The enzyme catalyses 5-methylaminomethyl-2-thiouridine(34) in tRNA + selenophosphate + (2E)-geranyl diphosphate + H2O + H(+) = 5-methylaminomethyl-2-selenouridine(34) in tRNA + (2E)-thiogeraniol + phosphate + diphosphate. It carries out the reaction 5-methylaminomethyl-2-thiouridine(34) in tRNA + (2E)-geranyl diphosphate = 5-methylaminomethyl-S-(2E)-geranyl-thiouridine(34) in tRNA + diphosphate. The catalysed reaction is 5-methylaminomethyl-S-(2E)-geranyl-thiouridine(34) in tRNA + selenophosphate + H(+) = 5-methylaminomethyl-2-(Se-phospho)selenouridine(34) in tRNA + (2E)-thiogeraniol. It catalyses the reaction 5-methylaminomethyl-2-(Se-phospho)selenouridine(34) in tRNA + H2O = 5-methylaminomethyl-2-selenouridine(34) in tRNA + phosphate. In terms of biological role, involved in the post-transcriptional modification of the uridine at the wobble position (U34) of tRNA(Lys), tRNA(Glu) and tRNA(Gln). Catalyzes the conversion of 2-thiouridine (S2U-RNA) to 2-selenouridine (Se2U-RNA). Acts in a two-step process involving geranylation of 2-thiouridine (S2U) to S-geranyl-2-thiouridine (geS2U) and subsequent selenation of the latter derivative to 2-selenouridine (Se2U) in the tRNA chain. This is tRNA 2-selenouridine synthase from Ectopseudomonas mendocina (strain ymp) (Pseudomonas mendocina).